The following is a 366-amino-acid chain: Phospho-N-acetylmuramoyl-pentapeptide-transferase (366 aa).

10 consecutive transmembrane segments (helical) span residues 3 to 23, 54 to 74, 80 to 100, 120 to 140, 161 to 181, 197 to 217, 238 to 258, 262 to 282, 288 to 308, and 341 to 361; these read QIFI…PVLI, GIAV…VGLV, PGVS…LGFA, LVGQ…FPNA, IAIG…YLVI, LASG…FWQF, LSML…WNAA, IFMG…LSVT, LMIL…IQVV, and FWLL…AEWL.

The protein belongs to the glycosyltransferase 4 family. MraY subfamily. It depends on Mg(2+) as a cofactor.

The protein localises to the cell membrane. It catalyses the reaction UDP-N-acetyl-alpha-D-muramoyl-L-alanyl-gamma-D-glutamyl-meso-2,6-diaminopimeloyl-D-alanyl-D-alanine + di-trans,octa-cis-undecaprenyl phosphate = di-trans,octa-cis-undecaprenyl diphospho-N-acetyl-alpha-D-muramoyl-L-alanyl-D-glutamyl-meso-2,6-diaminopimeloyl-D-alanyl-D-alanine + UMP. Its pathway is cell wall biogenesis; peptidoglycan biosynthesis. Catalyzes the initial step of the lipid cycle reactions in the biosynthesis of the cell wall peptidoglycan: transfers peptidoglycan precursor phospho-MurNAc-pentapeptide from UDP-MurNAc-pentapeptide onto the lipid carrier undecaprenyl phosphate, yielding undecaprenyl-pyrophosphoryl-MurNAc-pentapeptide, known as lipid I. This chain is Phospho-N-acetylmuramoyl-pentapeptide-transferase, found in Corynebacterium jeikeium (strain K411).